The following is a 232-amino-acid chain: Small ribosomal subunit protein uS3 (232 aa).

The KH type-2 domain occupies Ile-39–Arg-107. Residues Gly-211–Lys-232 form a disordered region. Positions Gln-213–Lys-223 are enriched in basic and acidic residues.

The protein belongs to the universal ribosomal protein uS3 family. In terms of assembly, part of the 30S ribosomal subunit. Forms a tight complex with proteins S10 and S14.

Binds the lower part of the 30S subunit head. Binds mRNA in the 70S ribosome, positioning it for translation. The protein is Small ribosomal subunit protein uS3 of Campylobacter concisus (strain 13826).